The sequence spans 383 residues: Protein arginine N-methyltransferase PRMT10 (383 aa).

Residues 1–23 (MRSSQNGGAMGGRAAGTGGGGPS) form a disordered region. The segment covering 8–22 (GAMGGRAAGTGGGGP) has biased composition (gly residues). The SAM-dependent MTase PRMT-type domain maps to 29–360 (EVDYAQYFCT…KENHRLMEIE (332 aa)). 5 residues coordinate S-adenosyl-L-methionine: Gln45, Arg54, Gly78, Glu100, and Glu129. Active-site residues include Glu143 and Glu152. The dimerization arm stretch occupies residues 190–230 (DRKRNDFDGAMADWHNFSDEIKSYYGVDMGVLTKPFAEEQE).

The protein belongs to the class I-like SAM-binding methyltransferase superfamily. Protein arginine N-methyltransferase family. Ring-like homodimer.

The catalysed reaction is L-arginyl-[protein] + 2 S-adenosyl-L-methionine = N(omega),N(omega)-dimethyl-L-arginyl-[protein] + 2 S-adenosyl-L-homocysteine + 2 H(+). Its function is as follows. Methylates (mono and asymmetric dimethylation) the guanidino nitrogens of arginyl residues in some proteins. Essential for regulating flowering time. The polypeptide is Protein arginine N-methyltransferase PRMT10 (PRMT10) (Arabidopsis thaliana (Mouse-ear cress)).